The chain runs to 268 residues: Tryptophan synthase alpha chain (268 aa).

Catalysis depends on proton acceptor residues glutamate 49 and aspartate 60.

Belongs to the TrpA family. In terms of assembly, tetramer of two alpha and two beta chains.

It catalyses the reaction (1S,2R)-1-C-(indol-3-yl)glycerol 3-phosphate + L-serine = D-glyceraldehyde 3-phosphate + L-tryptophan + H2O. It participates in amino-acid biosynthesis; L-tryptophan biosynthesis; L-tryptophan from chorismate: step 5/5. Its function is as follows. The alpha subunit is responsible for the aldol cleavage of indoleglycerol phosphate to indole and glyceraldehyde 3-phosphate. The chain is Tryptophan synthase alpha chain from Dechloromonas aromatica (strain RCB).